The chain runs to 258 residues: Snake venom serine protease 1 (258 aa).

Positions 1–18 (MVLIRVLANLLILQLSYA) are cleaved as a signal peptide. Residues 19–24 (QKSSEL) constitute a propeptide that is removed on maturation. Residues 25–249 (VVGGDECNIN…YNDWIKSIIA (225 aa)) enclose the Peptidase S1 domain. 6 cysteine pairs are disulfide-bonded: Cys31-Cys163, Cys50-Cys66, Cys98-Cys256, Cys142-Cys210, Cys174-Cys189, and Cys200-Cys225. Residue Asn44 is glycosylated (N-linked (GlcNAc...) asparagine). Catalysis depends on charge relay system residues His65 and Asp110. Residue Ser204 is the Charge relay system of the active site.

The protein belongs to the peptidase S1 family. Snake venom subfamily. In terms of assembly, monomer. Expressed by the venom gland.

It is found in the secreted. Snake venom serine protease that may act in the hemostasis system of the prey. The polypeptide is Snake venom serine protease 1 (TLG1) (Craspedocephalus gramineus (Bamboo pit viper)).